We begin with the raw amino-acid sequence, 100 residues long: EKC/KEOPS complex subunit GON7 (100 aa).

At Met1 the chain carries N-acetylmethionine. The interval 50–100 is disordered; that stretch reads SPVQGEAQDRVAAAPEEALDGDDEDDAEDENNIDNRTNSDGPTAKRPKPPS. A compositionally biased stretch (acidic residues) spans 66-81; it reads EALDGDDEDDAEDENN.

Component of the EKC/KEOPS complex composed of at least GON7, TP53RK, TPRKB, OSGEP and LAGE3; the whole complex dimerizes.

The protein resides in the nucleus. In terms of biological role, component of the EKC/KEOPS complex that is required for the formation of a threonylcarbamoyl group on adenosine at position 37 (t(6)A37) in tRNAs that read codons beginning with adenine. The complex is probably involved in the transfer of the threonylcarbamoyl moiety of threonylcarbamoyl-AMP (TC-AMP) to the N6 group of A37. GON7 plays a supporting role to the catalytic subunit OSGEP in the complex. This is EKC/KEOPS complex subunit GON7 from Sus scrofa (Pig).